We begin with the raw amino-acid sequence, 106 residues long: MVGRLRLAEGLNIPSFLGLAHQFSVSKDVDLSLVDRLCQNKILSSVLYFLCGRRLLVRLLGTAVHYWRGLCSMALLKAEGMYYIFFFLRKCISVNNRYKNFSPKRL.

This is an uncharacterized protein from Saccharomyces cerevisiae (strain ATCC 204508 / S288c) (Baker's yeast).